Consider the following 114-residue polypeptide: uncharacterized protein (114 aa).

This is an uncharacterized protein from Acanthamoeba polyphaga mimivirus (APMV).